The chain runs to 506 residues: Alpha-L-fucosidase 1 (506 aa).

The signal sequence occupies residues 1–23 (MNSQITLFFFFFSILSLSQISNS). N-linked (GlcNAc...) asparagine glycosylation is found at asparagine 22, asparagine 82, asparagine 248, asparagine 320, asparagine 355, and asparagine 487.

This sequence belongs to the glycosyl hydrolase 29 family.

It localises to the secreted. Its subcellular location is the extracellular space. The protein resides in the apoplast. The enzyme catalyses an alpha-L-fucoside + H2O = L-fucose + an alcohol. Hydrolyzes both 3- and 4-linked fucoses in Lewis determinants. Not active on neither 2-linked fucose nor on fucose in alpha-1,3-linkage to the innermost GlcNAc. This is Alpha-L-fucosidase 1 (FUC1) from Arabidopsis thaliana (Mouse-ear cress).